The sequence spans 138 residues: Protein X (138 aa).

The disordered stretch occupies residues 20 to 43; it reads PLRGQPSGPSVSGTSAGSPSSAAS. Residues 25–43 show a composition bias toward low complexity; sequence PSGPSVSGTSAGSPSSAAS. The mitochondrial targeting sequence stretch occupies residues 68-113; that stretch reads PCCLGFTCADLRTMDSTVNFVPWHAKRQLGMMQKDFWTAYIRDQLL.

It belongs to the orthohepadnavirus protein X family. May form homodimer. May interact with host CEBPA, CFLAR, CREB1, DDB1, E4F1, HBXIP, HSPD1/HSP60, NFKBIA, POLR2E and SMAD4. Interacts with host SMC5-SMC6 complex and induces its degradation. Interacts with host TRPC4AP; leading to prevent ubiquitination of TRPC4AP. Interacts with host PLSCR1; this interaction promotes ubiquitination and degradation of HBx and impairs HBx-mediated cell proliferation. A fraction may be phosphorylated in insect cells and HepG2 cells, a human hepatoblastoma cell line. Phosphorylated in vitro by host protein kinase C or mitogen-activated protein kinase. N-acetylated in insect cells.

The protein localises to the host cytoplasm. It is found in the host nucleus. It localises to the host mitochondrion. Multifunctional protein that plays a role in silencing host antiviral defenses and promoting viral transcription. Does not seem to be essential for HBV infection. May be directly involved in development of cirrhosis and liver cancer (hepatocellular carcinoma). Most of cytosolic activities involve modulation of cytosolic calcium. The effect on apoptosis is controversial depending on the cell types in which the studies have been conducted. May induce apoptosis by localizing in mitochondria and causing loss of mitochondrial membrane potential. May also modulate apoptosis by binding host CFLAR, a key regulator of the death-inducing signaling complex (DISC). Promotes viral transcription by using the host E3 ubiquitin ligase DDB1 to target the SMC5-SMC6 complex to proteasomal degradation. This host complex would otherwise bind to viral episomal DNA, and prevents its transcription. Moderately stimulates transcription of many different viral and cellular transcription elements. Promoters and enhancers stimulated by HBx contain DNA binding sites for NF-kappa-B, AP-1, AP-2, c-EBP, ATF/CREB, or the calcium-activated factor NF-AT. This Ground squirrel hepatitis virus (strain 27) (GSHV) protein is Protein X.